A 411-amino-acid chain; its full sequence is Tyrosine--tRNA ligase (411 aa).

Tyr-34 provides a ligand contact to L-tyrosine. Positions 39-48 match the 'HIGH' region motif; sequence CTATSLHIGS. L-tyrosine-binding residues include Tyr-171 and Gln-175. Positions 231 to 235 match the 'KMSKS' region motif; that stretch reads KMGKT. Residue Lys-234 coordinates ATP. The region spanning 345–411 is the S4 RNA-binding domain; the sequence is ISAYKLFYNV…GKKRHILVKV (67 aa).

It belongs to the class-I aminoacyl-tRNA synthetase family. TyrS type 1 subfamily. As to quaternary structure, homodimer.

Its subcellular location is the cytoplasm. It carries out the reaction tRNA(Tyr) + L-tyrosine + ATP = L-tyrosyl-tRNA(Tyr) + AMP + diphosphate + H(+). Catalyzes the attachment of tyrosine to tRNA(Tyr) in a two-step reaction: tyrosine is first activated by ATP to form Tyr-AMP and then transferred to the acceptor end of tRNA(Tyr). The sequence is that of Tyrosine--tRNA ligase from Rickettsia typhi (strain ATCC VR-144 / Wilmington).